A 146-amino-acid chain; its full sequence is MRALIQRVKEAKVIVDDVITGEIRQGLLVFLGLGRDDQLENGKKLIDKILKYRVFDDENGKMGWNLSQAQGGLLLVSQFTLMAQTQKGLRPDFGPAMPPQQAKVLYDQLVEYAQSQFDHVETGIFAADMQVHLINDGPVTFQLEIL.

Residues 137–138 (GP) carry the Gly-cisPro motif, important for rejection of L-amino acids motif.

Belongs to the DTD family. In terms of assembly, homodimer.

Its subcellular location is the cytoplasm. It carries out the reaction glycyl-tRNA(Ala) + H2O = tRNA(Ala) + glycine + H(+). It catalyses the reaction a D-aminoacyl-tRNA + H2O = a tRNA + a D-alpha-amino acid + H(+). In terms of biological role, an aminoacyl-tRNA editing enzyme that deacylates mischarged D-aminoacyl-tRNAs. Also deacylates mischarged glycyl-tRNA(Ala), protecting cells against glycine mischarging by AlaRS. Acts via tRNA-based rather than protein-based catalysis; rejects L-amino acids rather than detecting D-amino acids in the active site. By recycling D-aminoacyl-tRNA to D-amino acids and free tRNA molecules, this enzyme counteracts the toxicity associated with the formation of D-aminoacyl-tRNA entities in vivo and helps enforce protein L-homochirality. This chain is D-aminoacyl-tRNA deacylase, found in Acinetobacter baylyi (strain ATCC 33305 / BD413 / ADP1).